The following is a 238-amino-acid chain: Exosome complex exonuclease RRP46 homolog (238 aa).

Residues serine 174–leucine 194 are disordered. The segment covering proline 183 to arginine 192 has biased composition (basic and acidic residues).

Belongs to the RNase PH family. In terms of assembly, homodimer or monomer when reduced or oxidized, respectively. Component of the exosome core complex.

The protein resides in the nucleus. It localises to the nucleolus. In terms of biological role, probable component of the exosome 3'-&gt;5' exoribonuclease complex, a complex that degrades inherently unstable mRNAs containing AU-rich elements (AREs) within their 3'-untranslated regions. May form a homodimer separately from exosome complexes and function in DNA cleavage process. Binds double-stranded DNA (dsDNA) and single-stranded RNA (ssRNA), and possesses hydrolytic DNase and phosphorolytic RNase activities in vitro. The chain is Exosome complex exonuclease RRP46 homolog (RRP46) from Oryza sativa subsp. japonica (Rice).